The sequence spans 479 residues: Sulfate adenylyltransferase subunit 1 (479 aa).

The 215-residue stretch at 25–239 (KSLLRFLTCG…EVLETVDIQR (215 aa)) folds into the tr-type G domain. A G1 region spans residues 34 to 41 (GSVDDGKS). Residue 34–41 (GSVDDGKS) coordinates GTP. The interval 92 to 96 (GITID) is G2. Positions 113 to 116 (DTPG) are G3. GTP is bound by residues 113-117 (DTPGH) and 168-171 (NKMD). The segment at 168-171 (NKMD) is G4. Residues 206–208 (SAL) form a G5 region.

The protein belongs to the TRAFAC class translation factor GTPase superfamily. Classic translation factor GTPase family. CysN/NodQ subfamily. As to quaternary structure, heterodimer composed of CysD, the smaller subunit, and CysN.

It carries out the reaction sulfate + ATP + H(+) = adenosine 5'-phosphosulfate + diphosphate. It functions in the pathway sulfur metabolism; hydrogen sulfide biosynthesis; sulfite from sulfate: step 1/3. With CysD forms the ATP sulfurylase (ATPS) that catalyzes the adenylation of sulfate producing adenosine 5'-phosphosulfate (APS) and diphosphate, the first enzymatic step in sulfur assimilation pathway. APS synthesis involves the formation of a high-energy phosphoric-sulfuric acid anhydride bond driven by GTP hydrolysis by CysN coupled to ATP hydrolysis by CysD. The protein is Sulfate adenylyltransferase subunit 1 of Salmonella paratyphi A (strain ATCC 9150 / SARB42).